The chain runs to 63 residues: Large ribosomal subunit protein uL29 (63 aa).

The protein belongs to the universal ribosomal protein uL29 family.

The sequence is that of Large ribosomal subunit protein uL29 from Aeromonas salmonicida (strain A449).